The sequence spans 99 residues: Co-chaperonin GroES (99 aa).

The protein belongs to the GroES chaperonin family. Heptamer of 7 subunits arranged in a ring. Interacts with the chaperonin GroEL.

Its subcellular location is the cytoplasm. Together with the chaperonin GroEL, plays an essential role in assisting protein folding. The GroEL-GroES system forms a nano-cage that allows encapsulation of the non-native substrate proteins and provides a physical environment optimized to promote and accelerate protein folding. GroES binds to the apical surface of the GroEL ring, thereby capping the opening of the GroEL channel. This chain is Co-chaperonin GroES, found in Corynebacterium jeikeium (strain K411).